Here is a 464-residue protein sequence, read N- to C-terminus: Putative protein TIC 214 C-terminal part (464 aa).

This sequence belongs to the TIC214 family. In terms of assembly, part of the Tic complex.

Its subcellular location is the plastid. The protein resides in the chloroplast. Involved in protein precursor import into chloroplasts. May be part of an intermediate translocation complex acting as a protein-conducting channel at the inner envelope. This chain is Putative protein TIC 214 C-terminal part, found in Marchantia polymorpha (Common liverwort).